The primary structure comprises 192 residues: Transposon Tn552 DNA-invertase BinR (192 aa).

Residues 1-136 enclose the Resolvase/invertase-type recombinase catalytic domain; it reads MKIGYARVST…AGRIAARARG (136 aa). The active-site O-(5'-phospho-DNA)-serine intermediate is S9. Positions 163-182 form a DNA-binding region, H-T-H motif; that stretch reads IKTIAEQWKVSRTTIYRYLN.

It belongs to the site-specific recombinase resolvase family.

In terms of biological role, DNA-invertase, mediating the inversion of inv. This is Transposon Tn552 DNA-invertase BinR (resR) from Staphylococcus aureus.